The sequence spans 1339 residues: MDSLIRHCSEEIALDGSSGCSIDRLWEFAANFFFRQGIVQNLDDNYKTFVWPLILKEDGIEVWIEDEDATGLRSKMQEIPWNYQDITIELRARIRLFASEDRQWLTLTYKTKTDSKIQPLAFELLSCISRYRQEGVDRIQLCKETKQEPRSVYGRIQALEDASLISKVAINRSRAQTALLVLKRFESENSTINETVAQVSGKQIYNTEKIRSNICDAVQSSRNGICRHVDARAMVNLNHSRWERRYYARQVTYLHNNGYLRKCLTFVPNSPERCIRCLQFIKPYISSLDATEDDVDFTEVDDIPEDDELEEEEPLLPSKEEFDASFLQPLADVGPTLPQWSRFRPLEFQCFVLIRNAGFHGVITLQILSGLTGIRFNKPLFKLLGSLVEHRSSVPNHLSHMSITRFEDKTKKSRQYRYFTLQSQLNRLIRDGIPAETISKLLPHVHSLAGEFSPIDSSLFLNSLHHKGNMESNAEVSPDGMTLLPRKRGRPRKSANISVTSSPIRPSKNENNLPSLAISPVSEGFIQNATISTPSTSSNLSIAGSLTPSKTSRIYRGLAPLKNPEFNEDHVKKAEHLEPLLNVSSSVPSKNFTVSSPDHLKYGNTSSLQVSDSQSSIDLDSSFHYPVSVDSQLSHSTGSLMANFSSPTKKRRLESVDFIFLQRKGLILSYLVEQNGAFEISRKMFEDLADLKVRRNPETSRTVMDRRTFQQTLEKLMQEKKVRKLVIATNNGLGKLVRKDIVVQYDMKPDSPRFQQLRAQITTPEIEKQSTPEILKDVDVDFLKRNTSLSRRKSMPAEIKRHKESSETKPVDKEEVKKNEKEKDDPMRLAQQLLESLAPDFALHENTQQKSPVEKPKKLRKDRYASVEEFDYFSSTEHASKRSVKRFKNDFTSDEDETLIRAVVITQIYYGGTNRLIKWEAVQKCFPNRDIYALTRRYLSIRQHTKFKGLQQFLSENWQQMYKDAVSRKDLMPYPDSVDDFDPTPYVKASCRPYMISSSNLATTRLPRDLVDVYETYNIEVVKQETNFREMIFDPSLSVASKMNAYCDMPFTMPLSLNDKQNNEGDENCEKGQLFDAKSTIKSIVAIPDATYDARFSQERLMQYPEDILIAAHQELLDKRIITRVNSENSRLQPGRNFQFTEKFASSLKSPLPPFLLSQAKRFNKFLLEGFQNHKNHLFEETSNSGTLACILDLLSQGKLQISIVGSKFNEYGLSEGYRTRLLEHDNINVTLVLSGKESESKKNYGVTEKLATPPSHEPRLWLNGKCELIEMIWMNIEQSIVYQLLRKPGILRSQLTNLLFPGLEPREFNEVLDYFIAAGAAIEKDGLYLNHNYLFKLT.

The interval 470–515 (MESNAEVSPDGMTLLPRKRGRPRKSANISVTSSPIRPSKNENNLPS) is disordered. Residues 485–497 (PRKRGRPRKSANI) constitute a DNA-binding region (a.T hook). Residues 495–514 (ANISVTSSPIRPSKNENNLP) are compositionally biased toward polar residues. Phosphoserine occurs at positions 595 and 596. Positions 791–826 (RRKSMPAEIKRHKESSETKPVDKEEVKKNEKEKDDP) are disordered. Residues 798-826 (EIKRHKESSETKPVDKEEVKKNEKEKDDP) show a composition bias toward basic and acidic residues.

Component of the TFIIIC complex including sfc1, sfc3, sfc4, sfc6 and sfc7. The subunits are organized in two globular domains, tauA and tauB, connected by a proteolysis-sensitive and flexible linker. Interacts with sfc1, sfc4 and sfc6.

The protein resides in the nucleus envelope. TFIIIC mediates tRNA and 5S RNA gene activation by binding to intragenic promoter elements. Upstream of the transcription start site, TFIIIC assembles the initiation complex TFIIIB-TFIIIC-tDNA, which is sufficient for RNA polymerase III recruitment and function. Part of the tauB domain of TFIIIC that binds boxB DNA promoter sites of tRNA and similar genes. Cooperates with sfc6 in DNA binding. Localizes to chromatin insulator sequence without recruiting RNA polymerase III and plays a role in nuclear organization. The polypeptide is Transcription factor tau subunit sfc3 (Schizosaccharomyces pombe (strain 972 / ATCC 24843) (Fission yeast)).